Here is a 181-residue protein sequence, read N- to C-terminus: Large ribosomal subunit protein uL5 (181 aa).

The protein belongs to the universal ribosomal protein uL5 family. As to quaternary structure, part of the 50S ribosomal subunit; part of the 5S rRNA/L5/L18/L25 subcomplex. Contacts the 5S rRNA and the P site tRNA. Forms a bridge to the 30S subunit in the 70S ribosome.

This is one of the proteins that bind and probably mediate the attachment of the 5S RNA into the large ribosomal subunit, where it forms part of the central protuberance. In the 70S ribosome it contacts protein S13 of the 30S subunit (bridge B1b), connecting the 2 subunits; this bridge is implicated in subunit movement. Contacts the P site tRNA; the 5S rRNA and some of its associated proteins might help stabilize positioning of ribosome-bound tRNAs. This is Large ribosomal subunit protein uL5 from Nitrosococcus oceani (strain ATCC 19707 / BCRC 17464 / JCM 30415 / NCIMB 11848 / C-107).